A 110-amino-acid polypeptide reads, in one-letter code: UPF0145 protein BLD_1357 (110 aa).

This sequence belongs to the UPF0145 family.

The polypeptide is UPF0145 protein BLD_1357 (Bifidobacterium longum (strain DJO10A)).